The chain runs to 363 residues: Phosphate acyltransferase (363 aa).

The disordered stretch occupies residues 326–363 (ADSHPSKVNAGENAPPLASASNPSPEALPVGSLDRVEG). The segment covering 337-354 (ENAPPLASASNPSPEALP) has biased composition (low complexity).

The protein belongs to the PlsX family. Homodimer. Probably interacts with PlsY.

The protein localises to the cytoplasm. It carries out the reaction a fatty acyl-[ACP] + phosphate = an acyl phosphate + holo-[ACP]. It participates in lipid metabolism; phospholipid metabolism. Catalyzes the reversible formation of acyl-phosphate (acyl-PO(4)) from acyl-[acyl-carrier-protein] (acyl-ACP). This enzyme utilizes acyl-ACP as fatty acyl donor, but not acyl-CoA. The polypeptide is Phosphate acyltransferase (Synechococcus sp. (strain JA-3-3Ab) (Cyanobacteria bacterium Yellowstone A-Prime)).